We begin with the raw amino-acid sequence, 119 residues long: Hemerythrin subunit A (119 aa).

Histidine 26, histidine 55, glutamate 59, histidine 74, histidine 78, histidine 107, and aspartate 112 together coordinate Fe cation.

It belongs to the hemerythrin family.

Functionally, hemerythrin is a respiratory protein in blood cells of certain marine worms. The oxygen-binding site in each chain contains two iron atoms. The chain is Hemerythrin subunit A from Sipunculus nudus (Sipunculan worm).